Reading from the N-terminus, the 840-residue chain is Sorting nexin-25 (840 aa).

Residues 1–164 enclose the PXA domain; it reads MDKALKEVFD…MLLAQLAYRE (164 aa). An RGS domain is found at 287 to 401; it reads QFEDILANTF…IVSDLYEKLL (115 aa). Residues 434-499 adopt a coiled-coil conformation; the sequence is TNQINEQASF…RTDLQLHMAR (66 aa). The 121-residue stretch at 508–628 folds into the PX domain; the sequence is GMWKASITSG…AFLSPSPDYL (121 aa). A Phosphoserine modification is found at S665.

The protein belongs to the sorting nexin family.

The protein resides in the endosome membrane. In terms of biological role, may be involved in several stages of intracellular trafficking. The polypeptide is Sorting nexin-25 (SNX25) (Homo sapiens (Human)).